The primary structure comprises 230 residues: Probable caffeoyl-CoA O-methyltransferase 1 (230 aa).

S-adenosyl-L-methionine is bound by residues T52, D74, 76–77, S82, D100, A129, D151, D153, and Y160; that span reads GV. D151 contacts a divalent metal cation. A divalent metal cation is bound by residues D177 and N178.

Belongs to the class I-like SAM-binding methyltransferase superfamily. Cation-dependent O-methyltransferase family. CCoAMT subfamily.

The enzyme catalyses (E)-caffeoyl-CoA + S-adenosyl-L-methionine = (E)-feruloyl-CoA + S-adenosyl-L-homocysteine + H(+). The polypeptide is Probable caffeoyl-CoA O-methyltransferase 1 (omt5) (Dictyostelium discoideum (Social amoeba)).